The following is a 302-amino-acid chain: 4-hydroxy-tetrahydrodipicolinate synthase (302 aa).

Position 46 (T46) interacts with pyruvate. Y134 acts as the Proton donor/acceptor in catalysis. K162 (schiff-base intermediate with substrate) is an active-site residue. A pyruvate-binding site is contributed by V204.

This sequence belongs to the DapA family. As to quaternary structure, homotetramer; dimer of dimers.

The protein resides in the cytoplasm. The catalysed reaction is L-aspartate 4-semialdehyde + pyruvate = (2S,4S)-4-hydroxy-2,3,4,5-tetrahydrodipicolinate + H2O + H(+). The protein operates within amino-acid biosynthesis; L-lysine biosynthesis via DAP pathway; (S)-tetrahydrodipicolinate from L-aspartate: step 3/4. Its function is as follows. Catalyzes the condensation of (S)-aspartate-beta-semialdehyde [(S)-ASA] and pyruvate to 4-hydroxy-tetrahydrodipicolinate (HTPA). This is 4-hydroxy-tetrahydrodipicolinate synthase from Xylella fastidiosa (strain Temecula1 / ATCC 700964).